Reading from the N-terminus, the 235-residue chain is Leucyl/phenylalanyl-tRNA--protein transferase (235 aa).

The protein belongs to the L/F-transferase family.

Its subcellular location is the cytoplasm. The enzyme catalyses N-terminal L-lysyl-[protein] + L-leucyl-tRNA(Leu) = N-terminal L-leucyl-L-lysyl-[protein] + tRNA(Leu) + H(+). The catalysed reaction is N-terminal L-arginyl-[protein] + L-leucyl-tRNA(Leu) = N-terminal L-leucyl-L-arginyl-[protein] + tRNA(Leu) + H(+). It carries out the reaction L-phenylalanyl-tRNA(Phe) + an N-terminal L-alpha-aminoacyl-[protein] = an N-terminal L-phenylalanyl-L-alpha-aminoacyl-[protein] + tRNA(Phe). Its function is as follows. Functions in the N-end rule pathway of protein degradation where it conjugates Leu, Phe and, less efficiently, Met from aminoacyl-tRNAs to the N-termini of proteins containing an N-terminal arginine or lysine. This Cellvibrio japonicus (strain Ueda107) (Pseudomonas fluorescens subsp. cellulosa) protein is Leucyl/phenylalanyl-tRNA--protein transferase.